The following is a 142-amino-acid chain: Large ribosomal subunit protein uL11 (142 aa).

The protein belongs to the universal ribosomal protein uL11 family. As to quaternary structure, part of the ribosomal stalk of the 50S ribosomal subunit. Interacts with L10 and the large rRNA to form the base of the stalk. L10 forms an elongated spine to which L12 dimers bind in a sequential fashion forming a multimeric L10(L12)X complex. Post-translationally, one or more lysine residues are methylated.

In terms of biological role, forms part of the ribosomal stalk which helps the ribosome interact with GTP-bound translation factors. The protein is Large ribosomal subunit protein uL11 of Pasteurella multocida (strain Pm70).